An 80-amino-acid chain; its full sequence is Defensin-like protein 50 (80 aa).

A signal peptide spans Met-1 to Ala-27. Disulfide bonds link Cys-39-Cys-79, Cys-43-Cys-66, Cys-52-Cys-77, and Cys-56-Cys-78.

The protein belongs to the DEFL family.

It is found in the secreted. This chain is Defensin-like protein 50 (LCR49), found in Arabidopsis thaliana (Mouse-ear cress).